The chain runs to 323 residues: Arginase (323 aa).

The Mn(2+) site is built by His-119, Asp-142, His-144, and Asp-146. Substrate-binding positions include 144 to 148 (HADIN), 155 to 157 (SKN), and Asp-198. The Mn(2+) site is built by Asp-247 and Asp-249. Residues Thr-261 and Glu-292 each coordinate substrate.

This sequence belongs to the arginase family. Homotrimer. The cofactor is Mn(2+).

The catalysed reaction is L-arginine + H2O = urea + L-ornithine. The protein operates within nitrogen metabolism; urea cycle; L-ornithine and urea from L-arginine: step 1/1. The sequence is that of Arginase (aru1) from Schizosaccharomyces pombe (strain 972 / ATCC 24843) (Fission yeast).